The sequence spans 197 residues: uncharacterized protein (197 aa).

The first 23 residues, 1–23 (MSARAPKELRLALPPCLLNRTFA), serve as a signal peptide directing secretion. Topologically, residues 24–61 (SPNASGSGNTGARGPGAVGSGTCITQVGQQLFQSFSST) are extracellular. The N-linked (GlcNAc...) asparagine glycan is linked to Asn26. The helical transmembrane segment at 62–82 (LVLIVLVTLIFCLIVLSLSTF) threads the bilayer. Residues 83-197 (HIHKRRMKKR…EGLLQTVVLS (115 aa)) lie on the Cytoplasmic side of the membrane. The segment at 94-180 (MQRAQEEYER…SSPQGAHAAS (87 aa)) is disordered. Basic and acidic residues-rich tracts occupy residues 96–107 (RAQEEYERDHCS) and 125–136 (HAKETRLERQPR). Residues 141-161 (CAPSNASSLSSSSPGLPCQGP) show a composition bias toward low complexity. Pro residues predominate over residues 162–171 (CAPPPPPPAS).

It is found in the membrane. This is an uncharacterized protein from Homo sapiens (Human).